A 499-amino-acid polypeptide reads, in one-letter code: Heparin cofactor 2 (499 aa).

Positions 1–19 are cleaved as a signal peptide; that stretch reads MKHSLNALLIFLIITSAWG. Ser-37 is modified (phosphoserine; by FAM20C). An N-linked (GlcNAc...) (complex) asparagine glycan is attached at Asn-49. The tract at residues 68–79 is chemotactic activity; it reads DWIPEGEEDDDY. 2 tandem repeats follow at residues 73–83 and 87–97. Residues 73 to 97 form a 2 X 11 AA approximate repeats, Asp/Glu-rich (acidic) (hirudin-like) region; sequence GEEDDDYLDLEKIFSEDDDYIDIVD. A sulfotyrosine mark is found at Tyr-79 and Tyr-92. Asn-188 carries an N-linked (GlcNAc...) asparagine glycan. The glycosaminoglycan-binding site stretch occupies residues 192-212; that stretch reads KYEITTIHNLFRKLTHRLFRR. Asn-387 is a glycosylation site (N-linked (GlcNAc...) asparagine).

The protein belongs to the serpin family. Phosphorylated by FAM20C in the extracellular medium. As to expression, expressed predominantly in liver. Also present in plasma. Expressed in plasma (at protein level). Expressed in liver.

Functionally, thrombin inhibitor activated by the glycosaminoglycans, heparin or dermatan sulfate. In the presence of the latter, HC-II becomes the predominant thrombin inhibitor in place of antithrombin III (AT-III). Also inhibits chymotrypsin, but in a glycosaminoglycan-independent manner. In terms of biological role, peptides at the N-terminal of HC-II have chemotactic activity for both monocytes and neutrophils. Shows negligible inhibition, in vitro, of thrombin and tPA and no inhibition of factor Xa, in vitro. In Homo sapiens (Human), this protein is Heparin cofactor 2 (SERPIND1).